The following is a 211-amino-acid chain: FMN-dependent NADH:quinone oxidoreductase 2 (211 aa).

102 to 105 is a binding site for FMN; that stretch reads MWNF.

Belongs to the azoreductase type 1 family. In terms of assembly, homodimer. Requires FMN as cofactor.

It carries out the reaction 2 a quinone + NADH + H(+) = 2 a 1,4-benzosemiquinone + NAD(+). The enzyme catalyses N,N-dimethyl-1,4-phenylenediamine + anthranilate + 2 NAD(+) = 2-(4-dimethylaminophenyl)diazenylbenzoate + 2 NADH + 2 H(+). Quinone reductase that provides resistance to thiol-specific stress caused by electrophilic quinones. Its function is as follows. Also exhibits azoreductase activity. Catalyzes the reductive cleavage of the azo bond in aromatic azo compounds to the corresponding amines. The polypeptide is FMN-dependent NADH:quinone oxidoreductase 2 (Bacillus thuringiensis subsp. konkukian (strain 97-27)).